The primary structure comprises 434 residues: Putative polysaccharide biosynthesis protein with aminopeptidase-like domain (434 aa).

Aminopeptidase-like stretches follow at residues 1–55 (MEEI…IHEV) and 57–355 (SGTK…IENN). The interval 56–164 (KSGTKVFDWT…VVIDSSLEDG (109 aa)) is insert. Zn(2+) is bound by residues histidine 189, aspartate 195, and histidine 324. The interval 356-434 (RTYLNLNPKC…LYRVELLKLV (79 aa)) is permutated winged helix-turn-helix.

Belongs to the UPF0770 family. Homotrimer. The cofactor is Zn(2+).

In terms of biological role, the genomic context suggests a role in the biosynthesis of modified polysaccharides; this association with genes involved in carbohydrate metabolism is observed in several phylogenetically distinct taxa. Is not expected to have peptidase activity despite low similarity to aminopeptidases. The polypeptide is Putative polysaccharide biosynthesis protein with aminopeptidase-like domain (Clostridium acetobutylicum (strain ATCC 824 / DSM 792 / JCM 1419 / IAM 19013 / LMG 5710 / NBRC 13948 / NRRL B-527 / VKM B-1787 / 2291 / W)).